A 216-amino-acid chain; its full sequence is Endoplasmic reticulum vesicle protein 25 (216 aa).

The signal sequence occupies residues 1–25 (MGSSRLAMRSALGLFFLLFVQISLA). At 26–185 (LKFDIAAGKG…TNESTNERVK (160 aa)) the chain is on the lumenal side. One can recognise a GOLD domain in the interval 36–126 (ERCIRNFVLK…HRSIELDVDI (91 aa)). Residues 186-206 (WFAFGTMGMLVGLGVWQVIYL) form a helical membrane-spanning segment. Over 207–216 (RAYFRSKHLI) the chain is Cytoplasmic.

Belongs to the EMP24/GP25L family.

It is found in the endoplasmic reticulum membrane. Its subcellular location is the golgi apparatus membrane. Its function is as follows. Constituent of COPII-coated endoplasmic reticulum-derived transport vesicles. Required for efficient transport of a subset of secretory proteins to the Golgi. Facilitates retrograde transport from the Golgi to the endoplasmic reticulum. This Emericella nidulans (strain FGSC A4 / ATCC 38163 / CBS 112.46 / NRRL 194 / M139) (Aspergillus nidulans) protein is Endoplasmic reticulum vesicle protein 25 (erv25).